The sequence spans 310 residues: Serine protease 30 (310 aa).

A signal peptide spans 1-21 (MESRARCIFLLLLQILTRARG). The propeptide at 22 to 36 (DILPSVCGHSRDAGK) is activation peptide. In terms of domain architecture, Peptidase S1 spans 37–277 (IVGGQDALEG…YVDWIQRILA (241 aa)). Residues C63 and C79 are joined by a disulfide bond. Active-site charge relay system residues include H78 and D128. Intrachain disulfides connect C161/C235, C191/C214, and C225/C253. S229 serves as the catalytic Charge relay system. 2 N-linked (GlcNAc...) asparagine glycosylation sites follow: N238 and N279. S281 carries the GPI-anchor amidated serine lipid modification. The propeptide at 282-310 (DAYGYHSSASAAYQMLLPVLLAVALPGSL) is removed in mature form.

This sequence belongs to the peptidase S1 family. As to expression, expressed primarily in distal gut.

The protein localises to the cell membrane. Its activity is regulated as follows. Inhibited by aprotinin, leupeptin, benzamidine and soybean trypsin inhibitor. Partially inhibited by PMSF and DFP. Selectively cleaves synthetic peptide substrates of trypsin. Activates the epithelial sodium channel ENaC. The chain is Serine protease 30 (Prss30) from Mus musculus (Mouse).